The sequence spans 190 residues: Segregation and condensation protein B (190 aa).

The protein belongs to the ScpB family. Homodimer. Homodimerization may be required to stabilize the binding of ScpA to the Smc head domains. Component of a cohesin-like complex composed of ScpA, ScpB and the Smc homodimer, in which ScpA and ScpB bind to the head domain of Smc. The presence of the three proteins is required for the association of the complex with DNA.

It localises to the cytoplasm. Functionally, participates in chromosomal partition during cell division. May act via the formation of a condensin-like complex containing Smc and ScpA that pull DNA away from mid-cell into both cell halves. The chain is Segregation and condensation protein B from Bacillus mycoides (strain KBAB4) (Bacillus weihenstephanensis).